We begin with the raw amino-acid sequence, 302 residues long: MSDSRRVPITFQGLIQTLNQYWAEQGCVLIQPLDLEVGAGTFHPATFLRALGPEPWNAAYVQPSRRPTDGRYGENPNRLQRYYQYQVAMKPNPDNIQDLYLGSLKALGIDPLVHDLRFVEDNWESPTLGAWGLGWEVWLNGMEVTQFTYFQQAGGLECKPVLGEITYGLERLCMYLQSCDNVYDLVWTYGPDGTPVTYGDVYHQNEVEQSAYNFEHANVEELFHRFDACEAEAKHLVEVGLPLPAYEQVTKASHAFNLLDARRAISVTERQRYILRVRALAQGVAQAYYAQREKLGFPGVKK.

The protein belongs to the class-II aminoacyl-tRNA synthetase family. Tetramer of two alpha and two beta subunits.

It is found in the cytoplasm. It catalyses the reaction tRNA(Gly) + glycine + ATP = glycyl-tRNA(Gly) + AMP + diphosphate. This is Glycine--tRNA ligase alpha subunit from Xanthomonas campestris pv. campestris (strain 8004).